Reading from the N-terminus, the 509-residue chain is Src substrate cortactin (509 aa).

The interval 1 to 28 (MWKASAGHAVSITQDDGGADDWETDPDF) is disordered. The span at 17–28 (GGADDWETDPDF) shows a compositional bias: acidic residues. Cortactin repeat units lie at residues 80–116 (ASHGYGGKFGVEQDRMDKSAVGHEYQSKLSKHCSQVD), 117–153 (SVRGFGGKFGVQMDRVDQSAVGFEYQGKTEKHASQKD), 154–190 (YSSGFGGKYGVQADRVDKSAVGFDYQGKTEKHESQKD), 191–227 (YSKGFGGKYGIDKDKVDKSAVGFEYQGKTEKHESQKD), and 228–264 (YVKGFGGKFGVQTDRQDKCALGWDHQEKLQLHESQKD). N6-acetyllysine occurs at positions 87 and 107. A Phosphoserine modification is found at S113. The residue at position 119 (R119) is an Omega-N-methylarginine. K124 carries the post-translational modification N6-acetyllysine. N6-acetyllysine; alternate is present on K144. Residue K144 forms a Glycyl lysine isopeptide (Lys-Gly) (interchain with G-Cter in SUMO1); alternate linkage. K144 is covalently cross-linked (Glycyl lysine isopeptide (Lys-Gly) (interchain with G-Cter in SUMO2); alternate). Position 150 is a phosphoserine (S150). Residues K152, K161, and K171 each carry the N6-acetyllysine modification. K181 bears the N6-acetyllysine; alternate mark. A Glycyl lysine isopeptide (Lys-Gly) (interchain with G-Cter in SUMO1); alternate cross-link involves residue K181. K181 is covalently cross-linked (Glycyl lysine isopeptide (Lys-Gly) (interchain with G-Cter in SUMO2); alternate). Residues K193 and K198 each carry the N6-acetyllysine modification. A Glycyl lysine isopeptide (Lys-Gly) (interchain with G-Cter in SUMO1) cross-link involves residue K218. K235 carries the post-translational modification N6-acetyllysine. S261 is modified (phosphoserine). The Cortactin 6; truncated repeat unit spans residues 265–287 (YAKGFGGKYGVQKDRMDKNASTF). 4 positions are modified to N6-acetyllysine: K267, K272, K277, and K309. Residues 311-364 (SNIRANFENLAKEREQEDRRKAEAERAQRMAQERQEQEEARRKLEEQARAKKQT) are a coiled coil. The disordered stretch occupies residues 318-409 (ENLAKEREQE…EPEPEYSTEA (92 aa)). The span at 320–359 (LAKEREQEDRRKAEAERAQRMAQERQEQEEARRKLEEQAR) shows a compositional bias: basic and acidic residues. A Phosphothreonine modification is found at T364. 4 positions are modified to phosphoserine: S368, S370, S380, and S381. Y384 bears the Phosphotyrosine; by FAK1 mark. The span at 393–406 (EPSYGSSEPEPEYS) shows a compositional bias: low complexity. A Phosphotyrosine modification is found at Y405. S406 bears the Phosphoserine mark. Y429 and Y445 each carry phosphotyrosine; by FAK1. Phosphotyrosine; by SRC is present on residues Y445 and Y448. One can recognise an SH3 domain in the interval 451–509 (DLGITAIALYDYQAAGDDEISFDPDDVITNIEMIDDGWWRGVCKGRYGLFPANYVELRQ).

As to quaternary structure, part of a complex composed of NEDD9, AURKA and CTTN; within the complex NEDD9 acts as a scaffold protein and is required for complex formation. Interacts (via N-terminus) with NEDD9. Identified in a complex containing FGFR4, NCAM1, CDH2, PLCG1, FRS2, SRC, SHC1, GAP43 and CTTN. Forms a complex with ABL1 and MYLK. Interacts with SHANK2 and SHANK3 (via its SH3 domain). Interacts with PLXDC2 and SRCIN1. Interacts with SAMSN1 (via SH3 domain). Interacts (via SH3 domain) with ASAP1 (via Pro-rich region). Interacts with FER. Interacts with FGD1. Interacts with ABL2. Interacts with CTTNBP2NL; this interaction may target CTTN to stress fibers. Interacts with CTTNBP2; this interaction may target CTTN at the cell cortex or dendritic spines. Interacts (via SH3 domain) with DNM2. Interacts with ACTN1. Interacts with KCNA2 (via non-phosphorylated C-terminus). Interacts with PTK2/FAK1. Interacts with KCNH1. Interacts (via SH3 domain) with DIP2A (via N-terminus); the interaction enhances CTTN acetylation and is required for proper synaptic transmission. Interacts with XIRP1 (via N-terminus); the interaction promotes CTTN localization to intercalated disks in cardiomyocytes. In terms of processing, acetylated. Post-translationally, phosphorylated by FER. Phosphorylated in response to FGR activation. Phosphorylation by SRC promotes MYLK binding. Tyrosine phosphorylation in transformed cells may contribute to cellular growth regulation and transformation. Phosphorylated by PKN2 at both serine and threonine residues in a GTP-bound Rac1-dependent manner in hyaluronan-induced astrocytes and hence down-regulated CTTN ability to associate with filamentous actin. Phosphorylated on tyrosine residues in response to CHRM1 activation. Phosphorylated by PTK2/FAK1 in response to cell adhesion. In terms of tissue distribution, detected in liver (at protein level).

It localises to the cytoplasm. Its subcellular location is the cytoskeleton. The protein resides in the cell projection. The protein localises to the lamellipodium. It is found in the ruffle. It localises to the dendrite. Its subcellular location is the cell membrane. The protein resides in the podosome. The protein localises to the cell junction. It is found in the focal adhesion. It localises to the membrane. Its subcellular location is the clathrin-coated pit. The protein resides in the dendritic spine. The protein localises to the cell cortex. It is found in the endoplasmic reticulum. Functionally, contributes to the organization of the actin cytoskeleton and cell shape. Plays a role in the formation of lamellipodia and in cell migration. Plays a role in the regulation of neuron morphology, axon growth and formation of neuronal growth cones. Through its interaction with CTTNBP2, involved in the regulation of neuronal spine density. Plays a role in focal adhesion assembly and turnover. In complex with ABL1 and MYLK regulates cortical actin-based cytoskeletal rearrangement critical to sphingosine 1-phosphate (S1P)-mediated endothelial cell (EC) barrier enhancement. Plays a role in intracellular protein transport and endocytosis, and in modulating the levels of potassium channels present at the cell membrane. Plays a role in receptor-mediated endocytosis via clathrin-coated pits. Required for stabilization of KCNH1 channels at the cell membrane. In Rattus norvegicus (Rat), this protein is Src substrate cortactin.